The primary structure comprises 969 residues: Isoleucine--tRNA ligase (969 aa).

A 'HIGH' region motif is present at residues 68–78 (PYANGNLHMGH). An L-isoleucyl-5'-AMP-binding site is contributed by glutamate 584. The 'KMSKS' region signature appears at 625–629 (KMSKS). Lysine 628 is a binding site for ATP. 4 residues coordinate Zn(2+): cysteine 938, cysteine 941, cysteine 958, and cysteine 961.

This sequence belongs to the class-I aminoacyl-tRNA synthetase family. IleS type 1 subfamily. Monomer. It depends on Zn(2+) as a cofactor.

Its subcellular location is the cytoplasm. The catalysed reaction is tRNA(Ile) + L-isoleucine + ATP = L-isoleucyl-tRNA(Ile) + AMP + diphosphate. In terms of biological role, catalyzes the attachment of isoleucine to tRNA(Ile). As IleRS can inadvertently accommodate and process structurally similar amino acids such as valine, to avoid such errors it has two additional distinct tRNA(Ile)-dependent editing activities. One activity is designated as 'pretransfer' editing and involves the hydrolysis of activated Val-AMP. The other activity is designated 'posttransfer' editing and involves deacylation of mischarged Val-tRNA(Ile). The chain is Isoleucine--tRNA ligase from Prochlorococcus marinus (strain SARG / CCMP1375 / SS120).